The primary structure comprises 343 residues: Holliday junction branch migration complex subunit RuvB (343 aa).

Positions 1–185 are large ATPase domain (RuvB-L); sequence MEQEDFNIRE…FGINLHLEYY (185 aa). Residues leucine 24, arginine 25, glycine 66, lysine 69, threonine 70, threonine 71, 132–134, arginine 175, tyrosine 185, and arginine 222 contribute to the ATP site; that span reads EDY. Threonine 70 serves as a coordination point for Mg(2+). Positions 186–256 are small ATPAse domain (RuvB-S); it reads DDDILSNIIR…IAQFALEALN (71 aa). Residues 259 to 343 are head domain (RuvB-H); the sequence is KYGLDEIDNK…YSSQKTLFND (85 aa). DNA is bound by residues arginine 314 and arginine 319.

This sequence belongs to the RuvB family. Homohexamer. Forms an RuvA(8)-RuvB(12)-Holliday junction (HJ) complex. HJ DNA is sandwiched between 2 RuvA tetramers; dsDNA enters through RuvA and exits via RuvB. An RuvB hexamer assembles on each DNA strand where it exits the tetramer. Each RuvB hexamer is contacted by two RuvA subunits (via domain III) on 2 adjacent RuvB subunits; this complex drives branch migration. In the full resolvosome a probable DNA-RuvA(4)-RuvB(12)-RuvC(2) complex forms which resolves the HJ.

The protein resides in the cytoplasm. It catalyses the reaction ATP + H2O = ADP + phosphate + H(+). In terms of biological role, the RuvA-RuvB-RuvC complex processes Holliday junction (HJ) DNA during genetic recombination and DNA repair, while the RuvA-RuvB complex plays an important role in the rescue of blocked DNA replication forks via replication fork reversal (RFR). RuvA specifically binds to HJ cruciform DNA, conferring on it an open structure. The RuvB hexamer acts as an ATP-dependent pump, pulling dsDNA into and through the RuvAB complex. RuvB forms 2 homohexamers on either side of HJ DNA bound by 1 or 2 RuvA tetramers; 4 subunits per hexamer contact DNA at a time. Coordinated motions by a converter formed by DNA-disengaged RuvB subunits stimulates ATP hydrolysis and nucleotide exchange. Immobilization of the converter enables RuvB to convert the ATP-contained energy into a lever motion, pulling 2 nucleotides of DNA out of the RuvA tetramer per ATP hydrolyzed, thus driving DNA branch migration. The RuvB motors rotate together with the DNA substrate, which together with the progressing nucleotide cycle form the mechanistic basis for DNA recombination by continuous HJ branch migration. Branch migration allows RuvC to scan DNA until it finds its consensus sequence, where it cleaves and resolves cruciform DNA. The polypeptide is Holliday junction branch migration complex subunit RuvB (Bacteroides thetaiotaomicron (strain ATCC 29148 / DSM 2079 / JCM 5827 / CCUG 10774 / NCTC 10582 / VPI-5482 / E50)).